The sequence spans 517 residues: T-complex protein 11-like protein 2 (517 aa).

Positions 1–59 (MPFNGEKQCVSEDQQSDSESSRFAEGVASLSDYECSRQSFTSDSSSKSSSPASTSPPRG) are disordered. Ser-16 carries the post-translational modification Phosphoserine. The span at 36 to 55 (SRQSFTSDSSSKSSSPASTS) shows a compositional bias: low complexity.

The protein belongs to the TCP11 family. In terms of assembly, interacts with FMNL2; this interaction promotes muscle-derived satellite cell (MDSC) migration and differentiation.

The protein localises to the cytoplasm. The protein resides in the cytoskeleton. Its function is as follows. Promotes the migration of muscle-derived satellite cells (MDSCs) during differentiation throught interaction with FMNL2 and therefore may participate in microfilament assembly. In Mus musculus (Mouse), this protein is T-complex protein 11-like protein 2.